Consider the following 235-residue polypeptide: Leucyl/phenylalanyl-tRNA--protein transferase (235 aa).

This sequence belongs to the L/F-transferase family.

It localises to the cytoplasm. It carries out the reaction N-terminal L-lysyl-[protein] + L-leucyl-tRNA(Leu) = N-terminal L-leucyl-L-lysyl-[protein] + tRNA(Leu) + H(+). The enzyme catalyses N-terminal L-arginyl-[protein] + L-leucyl-tRNA(Leu) = N-terminal L-leucyl-L-arginyl-[protein] + tRNA(Leu) + H(+). It catalyses the reaction L-phenylalanyl-tRNA(Phe) + an N-terminal L-alpha-aminoacyl-[protein] = an N-terminal L-phenylalanyl-L-alpha-aminoacyl-[protein] + tRNA(Phe). Its function is as follows. Functions in the N-end rule pathway of protein degradation where it conjugates Leu, Phe and, less efficiently, Met from aminoacyl-tRNAs to the N-termini of proteins containing an N-terminal arginine or lysine. The protein is Leucyl/phenylalanyl-tRNA--protein transferase of Shewanella frigidimarina (strain NCIMB 400).